Here is a 143-residue protein sequence, read N- to C-terminus: Transcriptional regulator MraZ (143 aa).

SpoVT-AbrB domains follow at residues 5 to 47 (EYQH…PMSE) and 76 to 119 (ATEC…SKEI).

Belongs to the MraZ family. In terms of assembly, forms oligomers.

It is found in the cytoplasm. Its subcellular location is the nucleoid. In Bacillus licheniformis (strain ATCC 14580 / DSM 13 / JCM 2505 / CCUG 7422 / NBRC 12200 / NCIMB 9375 / NCTC 10341 / NRRL NRS-1264 / Gibson 46), this protein is Transcriptional regulator MraZ.